The following is a 201-amino-acid chain: Large ribosomal subunit protein uL4 (201 aa).

The tract at residues 51-73 (EVTGSGKKPWRQKGTGRARAGSV) is disordered.

It belongs to the universal ribosomal protein uL4 family. Part of the 50S ribosomal subunit.

One of the primary rRNA binding proteins, this protein initially binds near the 5'-end of the 23S rRNA. It is important during the early stages of 50S assembly. It makes multiple contacts with different domains of the 23S rRNA in the assembled 50S subunit and ribosome. Its function is as follows. Forms part of the polypeptide exit tunnel. This chain is Large ribosomal subunit protein uL4, found in Erwinia tasmaniensis (strain DSM 17950 / CFBP 7177 / CIP 109463 / NCPPB 4357 / Et1/99).